Here is a 309-residue protein sequence, read N- to C-terminus: Ribosomal RNA small subunit methyltransferase H (309 aa).

S-adenosyl-L-methionine-binding positions include 33–35, Asp-53, Phe-79, Asp-100, and Gln-107; that span reads GGH.

The protein belongs to the methyltransferase superfamily. RsmH family.

It is found in the cytoplasm. It carries out the reaction cytidine(1402) in 16S rRNA + S-adenosyl-L-methionine = N(4)-methylcytidine(1402) in 16S rRNA + S-adenosyl-L-homocysteine + H(+). Functionally, specifically methylates the N4 position of cytidine in position 1402 (C1402) of 16S rRNA. This is Ribosomal RNA small subunit methyltransferase H from Clostridium botulinum (strain Langeland / NCTC 10281 / Type F).